The primary structure comprises 755 residues: Xaa-Pro dipeptidyl-peptidase (755 aa).

Residues Ser348, Asp468, and His498 each act as charge relay system in the active site.

It belongs to the peptidase S15 family. In terms of assembly, homodimer.

The protein localises to the cytoplasm. The enzyme catalyses Hydrolyzes Xaa-Pro-|- bonds to release unblocked, N-terminal dipeptides from substrates including Ala-Pro-|-p-nitroanilide and (sequentially) Tyr-Pro-|-Phe-Pro-|-Gly-Pro-|-Ile.. Functionally, removes N-terminal dipeptides sequentially from polypeptides having unsubstituted N-termini provided that the penultimate residue is proline. This chain is Xaa-Pro dipeptidyl-peptidase, found in Streptococcus thermophilus (strain ATCC BAA-250 / LMG 18311).